We begin with the raw amino-acid sequence, 105 residues long: Cuticle protein AM1159 (105 aa).

A Chitin-binding type R&amp;R domain is found at 16 to 81 (DGNFNYNFQT…PESPLLPVGP (66 aa)). A disordered region spans residues 25 to 46 (TSNGIEDTKTGTPGSQGQSNMQ).

In terms of tissue distribution, arthrodial membrane.

This chain is Cuticle protein AM1159, found in Cancer pagurus (Rock crab).